Reading from the N-terminus, the 54-residue chain is Ovomucoid (54 aa).

The Kazal-like domain maps to 4–54 (VDCSDYPRPVCTLDYMPLCGSDNKTYSNKCNFCNAVVDSNGTITLSHFGRC). Cystine bridges form between cysteine 6-cysteine 36, cysteine 14-cysteine 33, and cysteine 22-cysteine 54. Asparagine 43 carries N-linked (GlcNAc...) asparagine glycosylation.

It localises to the secreted. In Corvus albus (Pied crow), this protein is Ovomucoid.